The sequence spans 811 residues: Lysine-specific histone demethylase 1 homolog 3 (811 aa).

The span at 1 to 10 shows a compositional bias: pro residues; that stretch reads MSDQPPPYTP. A disordered region spans residues 1 to 79; the sequence is MSDQPPPYTP…PSAQPPPRAS (79 aa). Basic residues predominate over residues 44–55; it reads NKRKRTGFRRKL. The segment covering 56-71 has biased composition (low complexity); sequence PSGSPAAPVAVAASPS. Positions 88–189 constitute an SWIRM domain; that stretch reads NREPTAEAVT…FGVAPAIKER (102 aa). 4 residues coordinate FAD: Glu-227, Arg-229, Arg-235, and Glu-609. Residues 790 to 811 form a disordered region; that stretch reads RNSSRTKTRPSKLKIGIPKSKS.

The protein belongs to the flavin monoamine oxidase family. It depends on FAD as a cofactor.

Probable histone demethylase. The sequence is that of Lysine-specific histone demethylase 1 homolog 3 from Oryza sativa subsp. indica (Rice).